Here is a 379-residue protein sequence, read N- to C-terminus: Chaperone protein DnaJ (379 aa).

Residues 5–70 enclose the J domain; sequence DYYEVLGVAK…QKRAAYDQYG (66 aa). The CR-type zinc finger occupies 139–217; it reads GYDTQIRVPS…CHGAGKVKET (79 aa). Zn(2+) is bound by residues cysteine 152, cysteine 155, cysteine 169, cysteine 172, cysteine 191, cysteine 194, cysteine 205, and cysteine 208. 4 CXXCXGXG motif repeats span residues 152–159, 169–176, 191–198, and 205–212; these read CEICHGSG, CPTCSGSG, CPKCHGTG, and CGHCHGAG.

It belongs to the DnaJ family. In terms of assembly, homodimer. Requires Zn(2+) as cofactor.

It is found in the cytoplasm. Its function is as follows. Participates actively in the response to hyperosmotic and heat shock by preventing the aggregation of stress-denatured proteins and by disaggregating proteins, also in an autonomous, DnaK-independent fashion. Unfolded proteins bind initially to DnaJ; upon interaction with the DnaJ-bound protein, DnaK hydrolyzes its bound ATP, resulting in the formation of a stable complex. GrpE releases ADP from DnaK; ATP binding to DnaK triggers the release of the substrate protein, thus completing the reaction cycle. Several rounds of ATP-dependent interactions between DnaJ, DnaK and GrpE are required for fully efficient folding. Also involved, together with DnaK and GrpE, in the DNA replication of plasmids through activation of initiation proteins. The protein is Chaperone protein DnaJ of Paraburkholderia phytofirmans (strain DSM 17436 / LMG 22146 / PsJN) (Burkholderia phytofirmans).